The following is a 578-amino-acid chain: MRPWTGSWRWIMLILFAWGTLLFYIGGHLVRDNENPDHSSRELSKILAKLERLKQQNEDLRRMAESLRIPEGPIEQGAAAGRIRALEEQLLKAKEQIEMYKQQSSNAVSGLGKDHEILRRAIENGAKEFWYFVQSEVKKLKHLDRNELQRHVDEIIIDMGHQQRSVMTDLYYLSQTDGAGDWREREAKDLTDLVQRRITYLQNPKDCSKAKKLVCNINKGCGYGCQLHHVVYCFMIAYGTQRTLILESQSWRYATGGWETVFKPVSETCTDRSGSSTGHWSGEANDKNVQVVELPIVDSLHPRPPYLPLGVPEDLADRLIRLHGDPAVWWVSQFVKYLIRPQPWLEKEIEESTKKLGFKHPVIGVHVRRTDKVGTEAAFHPIEEYMVHVEEHFQLLARRMQIDKKRVYLATDDPTLLQEAKAKYPQYEFISDNSISWSAGLHNRYTENSLRGVILDIHFLSQADFLVCTFSSQVCRVAYEIMQTLHPDASAHFHSLDDIYYFGGQNAHNQLAIYPHQPRNAEEIPLEPGDIIGVAGNHWDGYSKGINRKLGRTGLYPSYKVKEKIETVKYPTYQEAEK.

The Cytoplasmic portion of the chain corresponds to 1 to 9; that stretch reads MRPWTGSWR. Residues 10–30 form a helical; Signal-anchor for type II membrane protein membrane-spanning segment; it reads WIMLILFAWGTLLFYIGGHLV. The Lumenal segment spans residues 31–578; sequence RDNENPDHSS…KYPTYQEAEK (548 aa). Disulfide bonds link Cys-207–Cys-269, Cys-215–Cys-233, and Cys-221–Cys-225. The GT23 domain occupies 209 to 496; sequence KAKKLVCNIN…PDASAHFHSL (288 aa). The short motif at 302 to 308 is the SH3-binding element; the sequence is PRPPYLP. The important for donor substrate binding stretch occupies residues 368-369; that stretch reads RR. Cys-468 and Cys-475 are oxidised to a cystine. The SH3 domain occupies 505-566; that stretch reads QNAHNQLAIY…PSYKVKEKIE (62 aa).

This sequence belongs to the glycosyltransferase 23 family.

It localises to the golgi apparatus. The protein resides in the golgi stack membrane. The catalysed reaction is N(4)-{beta-D-GlcNAc-(1-&gt;2)-alpha-D-Man-(1-&gt;3)-[beta-D-GlcNAc-(1-&gt;2)-alpha-D-Man-(1-&gt;6)]-beta-D-Man-(1-&gt;4)-beta-D-GlcNAc-(1-&gt;4)-beta-D-GlcNAc}-L-asparaginyl-[protein] + GDP-beta-L-fucose = an N(4)-{beta-D-GlcNAc-(1-&gt;2)-alpha-D-Man-(1-&gt;3)-[beta-D-GlcNAc-(1-&gt;2)-alpha-D-Man-(1-&gt;6)]-beta-D-Man-(1-&gt;4)-beta-D-GlcNAc-(1-&gt;4)-[alpha-L-Fuc-(1-&gt;6)]-beta-D-GlcNAc}-L-asparaginyl-[protein] + GDP + H(+). Its pathway is protein modification; protein glycosylation. Catalyzes the addition of fucose in alpha 1-6 linkage to the first GlcNAc residue, next to the peptide chains in N-glycans. This chain is Alpha-(1,6)-fucosyltransferase (fut8), found in Xenopus tropicalis (Western clawed frog).